Consider the following 526-residue polypeptide: Cytochrome P450 monooxygenase COX2 (526 aa).

N-linked (GlcNAc...) asparagine glycosylation occurs at Asn11. The helical transmembrane segment at 12–31 (ITTNHVAAAVCAGIAVYAIV) threads the bilayer. An N-linked (GlcNAc...) asparagine glycan is attached at Asn302. Cys450 serves as a coordination point for heme.

This sequence belongs to the cytochrome P450 family. Heme serves as cofactor.

It is found in the membrane. Its pathway is secondary metabolite biosynthesis. In terms of biological role, cytochrome P450 monooxygenase; part of the gene cluster that mediates the biosynthesis of alpha-cuprenene and oxidized derivatives. The alpha-cuprenene synthase COP6 is the only sesquiterpene synthase identified in C.cinereus that appears to be part of a biosynthetic gene cluster and is highly specific since it catalyzes the cyclization of (2E,6E)-farnesyl diphosphate into only one product, alpha-cuprenene. The cytochrome P450 monooxygenase COX2 then oxidizes the cyclohexadiene ring of alpha-cuprenene at positions 1 and 4, yielding first alpha-cuparene, followed by alpha-cuparophenol and a further yet unidentified compound resulting from one additional oxidation step. The cytochrome P450 monooxygenase COX1 then likely catalyzes the oxidation at position 9 of the pentane ring of alpha-cuprenene to give the corresponding hydroxy or ketone derivatives. This is Cytochrome P450 monooxygenase COX2 from Coprinopsis cinerea (strain Okayama-7 / 130 / ATCC MYA-4618 / FGSC 9003) (Inky cap fungus).